We begin with the raw amino-acid sequence, 640 residues long: Threonine--tRNA ligase (640 aa).

The 61-residue stretch at 1-61 (MPIITLPDGS…TNDAEIQIIT (61 aa)) folds into the TGS domain. The interval 242-533 (DHRKLGKKLS…LIENYSGNLP (292 aa)) is catalytic. Residues Cys-333, His-384, and His-510 each coordinate Zn(2+).

The protein belongs to the class-II aminoacyl-tRNA synthetase family. Homodimer. The cofactor is Zn(2+).

It is found in the cytoplasm. It carries out the reaction tRNA(Thr) + L-threonine + ATP = L-threonyl-tRNA(Thr) + AMP + diphosphate + H(+). Functionally, catalyzes the attachment of threonine to tRNA(Thr) in a two-step reaction: L-threonine is first activated by ATP to form Thr-AMP and then transferred to the acceptor end of tRNA(Thr). Also edits incorrectly charged L-seryl-tRNA(Thr). The sequence is that of Threonine--tRNA ligase from Prochlorococcus marinus (strain NATL1A).